We begin with the raw amino-acid sequence, 311 residues long: Taste receptor type 2 member 9 (311 aa).

Residues 1–9 (MPSTIEAIY) are Extracellular-facing. A helical transmembrane segment spans residues 10 to 32 (IILIAGELTIGIWGNGFIVLVNC). The Cytoplasmic portion of the chain corresponds to 33 to 52 (IDWLKRRDVSLIDIILISLA). Residues 53-72 (ISRICLLCVISLDGFFILLF) form a helical membrane-spanning segment. Over 73 to 86 (PGTYDTNVLESIMD) the chain is Extracellular. A helical transmembrane segment spans residues 87–109 (AVWTFANNSSLWFTSCLSIFYLL). Topologically, residues 110-128 (KIANISHPFFFWLKLKINK) are cytoplasmic. A helical transmembrane segment spans residues 129-146 (VILAILLGSFLISLIISF). At 147 to 179 (PINGMWYNLFKVSHEENITWAFKVSTIPGAFKQ) the chain is on the extracellular side. N163 carries an N-linked (GlcNAc...) asparagine glycan. Residues 180–202 (LTLNLGAMVPFILCLISFFLLLF) form a helical membrane-spanning segment. Topologically, residues 203–233 (SLVRHTKQIQLHATGFRDPSTEAHMRAVKAV) are cytoplasmic. A helical transmembrane segment spans residues 234–256 (IIFLLLLILYYPVFLVMTSSTLI). The Extracellular portion of the chain corresponds to 257–260 (PQGK). The helical transmembrane segment at 261-283 (LVLMIGDIVTVIFPSSHSFILIM) threads the bilayer. Residues 284 to 311 (GNSKLRAAFLKMLRFVKGFLRRRKPFVP) are Cytoplasmic-facing.

The protein belongs to the G-protein coupled receptor T2R family.

The protein resides in the membrane. In terms of biological role, gustducin-coupled receptor implicated in the perception of bitter compounds in the oral cavity and the gastrointestinal tract. Signals through PLCB2 and the calcium-regulated cation channel TRPM5. This is Taste receptor type 2 member 9 (TAS2R9) from Macaca mulatta (Rhesus macaque).